The following is a 612-amino-acid chain: Pentatricopeptide repeat-containing protein At4g14050, mitochondrial (612 aa).

The N-terminal 24 residues, 1-24, are a transit peptide targeting the mitochondrion; the sequence is MLIPHYLHQLQLCARNRTLTTAKA. PPR repeat units follow at residues 37–71, 72–103, 104–138, 139–169, 170–204, 205–235, 237–271, 272–302, 303–337, 338–373, and 374–408; these read CCPLANTLVNVYGKCGAASHALQVFDEMPHRDHIA, WASVLTALNQANLSGKTLSVFSSVGSSSGLRP, DDFVFSALVKACANLGSIDHGRQVHCHFIVSEYAN, DEVVKSSLVDMYAKCGLLNSAKAVFDSIRVK, NTISWTAMVSGYAKSGRKEEALELFRILPVKNLYS, WTALISGFVQSGKGLEAFSVFTEMRRERVDI, DPLVLSSIVGACANLAASIAGRQVHGLVIALGFDS, CVFISNALIDMYAKCSDVIAAKDIFSRMRHR, DVVSWTSLIVGMAQHGQAEKALALYDDMVSHGVKP, NEVTFVGLIYACSHVGFVEKGRELFQSMTKDYGIRP, and SLQHYTCLLDLLGRSGLLDEAENLIHTMPFPPDEP. The segment at 409–485 is type E motif; that stretch reads TWAALLSACK…DPGHSSVEVR (77 aa). The segment at 486-516 is type E(+) motif; that stretch reads KETEVFYAGETSHPLKEDIFRLLKKLEEEMR. The segment at 518–612 is type DYW motif; it reads RNGYVPDTSW…GGKCSCNDFW (95 aa).

The protein belongs to the PPR family. PCMP-H subfamily. As to quaternary structure, interacts with MORF8/RIP1 and MORF1/RIP8.

It is found in the mitochondrion. Its function is as follows. Involved in C-to-U editing of mitochondrial RNA. Required specifically for editing the mitochondrial NAD4, MT-CYB/COB and RPL16 transcripts. In Arabidopsis thaliana (Mouse-ear cress), this protein is Pentatricopeptide repeat-containing protein At4g14050, mitochondrial (PCMP-H13).